Here is a 405-residue protein sequence, read N- to C-terminus: MMDGGKGFEDALTGEQKIRNFNINFGPQHPAAHGVLRMVLELDGEIVERCDPHIGLLHRGTEKLMESRTYLQNLPYFDRLDYVAPMNQEHAWCLAIEKLTGVEVPRRASLIRVLYSEIGRILNHLLNVTTQAMDVGALTPPLWGFEEREKLMVFYERACGARLHAAYFRPGGVHQDLPDALLDDIEAWSHTFPNVLDDIDGLLTENRIFKQRNCDIGVVSEEEILQYGFSGVMVRGSGLAWDLRRAQPYECYDEFEFQVPVGKNGDCYDRYLCRMEEMRQSISIIRQAIAKLRDCPGDVLARGKLTPPKRGDMKTSMESLIHHFKLYTEGFHVPAGEVYAAVEAPKGEFGVYLVADGTNKPYRSKIRAPGYLHLQAMDHVARGHQLADVAAIIGTMDIVFGEIDR.

This sequence belongs to the complex I 49 kDa subunit family. As to quaternary structure, NDH-1 is composed of 14 different subunits. Subunits NuoB, C, D, E, F, and G constitute the peripheral sector of the complex.

It is found in the cell inner membrane. It carries out the reaction a quinone + NADH + 5 H(+)(in) = a quinol + NAD(+) + 4 H(+)(out). In terms of biological role, NDH-1 shuttles electrons from NADH, via FMN and iron-sulfur (Fe-S) centers, to quinones in the respiratory chain. The immediate electron acceptor for the enzyme in this species is believed to be ubiquinone. Couples the redox reaction to proton translocation (for every two electrons transferred, four hydrogen ions are translocated across the cytoplasmic membrane), and thus conserves the redox energy in a proton gradient. This Ruegeria pomeroyi (strain ATCC 700808 / DSM 15171 / DSS-3) (Silicibacter pomeroyi) protein is NADH-quinone oxidoreductase subunit D.